The primary structure comprises 301 residues: UDP-N-acetylenolpyruvoylglucosamine reductase (301 aa).

The 165-residue stretch at 30 to 194 (VGGEPDYLVF…LSAKFALAPG (165 aa)) folds into the FAD-binding PCMH-type domain. The active site involves R173. S223 functions as the Proton donor in the catalytic mechanism. Residue E293 is part of the active site.

It belongs to the MurB family. Requires FAD as cofactor.

Its subcellular location is the cytoplasm. It catalyses the reaction UDP-N-acetyl-alpha-D-muramate + NADP(+) = UDP-N-acetyl-3-O-(1-carboxyvinyl)-alpha-D-glucosamine + NADPH + H(+). Its pathway is cell wall biogenesis; peptidoglycan biosynthesis. Cell wall formation. This is UDP-N-acetylenolpyruvoylglucosamine reductase from Streptococcus pneumoniae (strain CGSP14).